The primary structure comprises 550 residues: MSAKEVLFGNDARVKMLAGVNVLANAVKVTLGPKGRNVVLDKSFGAPLITKDGVSVAKEIELEDKFENMGAQMVKEVASKANDAAGDGTTTATVLAQSIVTEGLKAVAAGMNPMDLKRGIDKAVIAAVAELKNLSQECSDTKAIAQVGTISANSDETIGEIIATAMERVGKEGVITVEEGQALENELDVVEGMQFDRGYLSPYFINKPETGSVELETPFILLVDKKVSNIRELLPILEGLAKTGKPLLIVAEDVEGEALATLVVNNMRGIVKVAAVKAPGFGDRRKAMLQDIAILTGGTVIAEEIGLELEKATLEDLGTAKRVVITKDDTTIIDGTGEETQIKARVAQIKIQAEESTSDYDKEKLQERMAKLAGGVAVIKVGAATEVEMKEKKARVEDALHATRAAVEEGVVAGGGVALVRVASKIGEVEVINEDQKHGVVIALRAMEAPLRQIATNAGEEGSVVANNVKNGTGNYGYNAGNDTYGDMLEMGILDPTKVTRSALQFASSIAGLMITTEAMVGEIPQDAAGAPDMGGMGGMGGMGGMGGMM.

ATP is bound by residues 30–33 (TLGP), lysine 51, 87–91 (DGTTT), glycine 415, and aspartate 495.

It belongs to the chaperonin (HSP60) family. As to quaternary structure, forms a cylinder of 14 subunits composed of two heptameric rings stacked back-to-back. Interacts with the co-chaperonin GroES.

It localises to the cytoplasm. It catalyses the reaction ATP + H2O + a folded polypeptide = ADP + phosphate + an unfolded polypeptide.. Its function is as follows. Together with its co-chaperonin GroES, plays an essential role in assisting protein folding. The GroEL-GroES system forms a nano-cage that allows encapsulation of the non-native substrate proteins and provides a physical environment optimized to promote and accelerate protein folding. In Shewanella piezotolerans (strain WP3 / JCM 13877), this protein is Chaperonin GroEL.